Reading from the N-terminus, the 340-residue chain is Heat-inducible transcription repressor HrcA (340 aa).

Belongs to the HrcA family.

Functionally, negative regulator of class I heat shock genes (grpE-dnaK-dnaJ and groELS operons). Prevents heat-shock induction of these operons. This chain is Heat-inducible transcription repressor HrcA, found in Burkholderia mallei (strain NCTC 10247).